Consider the following 327-residue polypeptide: Mitochondrial substrate carrier family protein A (327 aa).

Positions 1-36 are disordered; the sequence is MVINNQNNNNQNNNQNNNNKNDNLNNSTTTTTTTAT. The Mitochondrial intermembrane segment spans residues 1 to 48; sequence MVINNQNNNNQNNNQNNNNKNDNLNNSTTTTTTTATTTKSSTLFHSND. 3 Solcar repeats span residues 43-132, 140-224, and 233-323; these read LFHS…FKRM, ISVI…IKEK, and PPLY…AITL. Residues 49-66 form a helical membrane-spanning segment; it reads FFSGLIAGIVSRTLTAPL. Topologically, residues 67-106 are mitochondrial matrix; the sequence is ERIKILNQVEVILKDGTKYNRIIPAFKVIIKEEGIAGLFR. A helical transmembrane segment spans residues 107–127; that stretch reads GNFVNIIKAGPQSAIRFYSYG. Over 128–145 the chain is Mitochondrial intermembrane; the sequence is AFKRMASEPDGSISVINR. A helical transmembrane segment spans residues 146-166; sequence MWAGASSGVVSVALTHPLDVI. At 167-192 the chain is on the mitochondrial matrix side; the sequence is KTHITVIAPTAATIKNVTKGIYRDLG. A helical membrane pass occupies residues 193-213; it reads IIGFFRGLSAGILNIAPFAAL. Residues 214–238 are Mitochondrial intermembrane-facing; it reads NFTFYETIKEKTQQYILKSPPLYAP. Residues 239–259 form a helical membrane-spanning segment; it reads SIYGAISGGLTMTILYPLDVV. The Mitochondrial matrix portion of the chain corresponds to 260–303; it reads KRRIMLQHFDRNQLPIYKNFIDAIIKITKTEGISALYKGIRPAY. Residues 304 to 324 traverse the membrane as a helical segment; sequence LKVIPTVSINFLIYEGAITLF. Residues 325-327 lie on the Mitochondrial intermembrane side of the membrane; the sequence is EKK.

It belongs to the mitochondrial carrier (TC 2.A.29) family.

It is found in the mitochondrion inner membrane. Calcium-dependent mitochondrial solute carrier. Mitochondrial solute carriers shuttle metabolites, nucleotides, and cofactors through the mitochondrial inner membrane. The sequence is that of Mitochondrial substrate carrier family protein A (mcfA) from Dictyostelium discoideum (Social amoeba).